Here is a 346-residue protein sequence, read N- to C-terminus: Uroporphyrinogen decarboxylase (346 aa).

Substrate is bound by residues 21-25 (RQAGR), Asp-71, Tyr-146, Ser-201, and His-316.

Belongs to the uroporphyrinogen decarboxylase family. In terms of assembly, homodimer.

The protein resides in the cytoplasm. The enzyme catalyses uroporphyrinogen III + 4 H(+) = coproporphyrinogen III + 4 CO2. The protein operates within porphyrin-containing compound metabolism; protoporphyrin-IX biosynthesis; coproporphyrinogen-III from 5-aminolevulinate: step 4/4. In terms of biological role, catalyzes the decarboxylation of four acetate groups of uroporphyrinogen-III to yield coproporphyrinogen-III. The polypeptide is Uroporphyrinogen decarboxylase (Rickettsia africae (strain ESF-5)).